The primary structure comprises 315 residues: PIH1 domain-containing protein 2 (315 aa).

The protein belongs to the PIH1 family.

In Homo sapiens (Human), this protein is PIH1 domain-containing protein 2 (PIH1D2).